We begin with the raw amino-acid sequence, 141 residues long: Transmembrane protein 216 (141 aa).

The next 4 membrane-spanning stretches (helical) occupy residues isoleucine 15–phenylalanine 35, leucine 49–phenylalanine 69, leucine 82–leucine 102, and serine 115–phenylalanine 135.

As to quaternary structure, part of the tectonic-like complex (also named B9 complex). Interacts with TMEM107.

It is found in the membrane. Its subcellular location is the cytoplasm. The protein localises to the cytoskeleton. It localises to the cilium basal body. Part of the tectonic-like complex which is required for tissue-specific ciliogenesis and may regulate ciliary membrane composition. This Rattus norvegicus (Rat) protein is Transmembrane protein 216 (Tmem216).